The primary structure comprises 245 residues: Deoxyadenosine kinase (245 aa).

An ATP-binding site is contributed by 28 to 36; the sequence is GLIGAGKTT. Substrate is bound by residues E52, Y64, and Q75. D99 (proton acceptor) is an active-site residue. Substrate contacts are provided by R100, D105, and E165.

It belongs to the DCK/DGK family.

The catalysed reaction is 2'-deoxyadenosine + ATP = dAMP + ADP + H(+). Functionally, specific kinase that phosphorylates deoxyadenosine but not any other deoxyribonucleoside, as part of the deoxyribonucleotide salvage pathway. The polypeptide is Deoxyadenosine kinase (dak) (Dictyostelium discoideum (Social amoeba)).